The sequence spans 578 residues: MGNCCSDVASGAGATAGVGGSGSSAALGATNDALDYYLKSKGFNGLFSQIELSFSASNLRDRDVLSKSDPMVVVYQKEKDATLSEVFRSEVVLNSLAPKWIKKFIVAYHFETVQTLVFRVYDVDTKFQNSREEMLKLDEQQFLGEATCALSEIITKSTRTSTLELKRKDGFAPQAQPHHGKLIIHAEESLASKISTEIVFRCSNLESKDLFSKSDPFLVVSKIVEHGTPIPVSKTEVRKNDLNPIWKPVFLSVQQVGSKDSPVIIECSDFNSNGKHSLIGKVQKSLSDLEKLHLAGQGINFSLPTGAGQNKVLKSQLFVDKFTETVHHTFLEYLASGFELNFMVAIDFTASNGNPRLPDSLHYIDPSGRLNAYQRAIMDVGEVLQFYDSDKRFPAWGFGARPIDAPVSHCFNLNGSSSYSEVDGIQGIMTSYTSALFNVSLAGPTLFGPVINAAAMIASASLAQGSRKYYVLLIITDGVITDLQETKDALVSASDLPLSILIVGVGGADFKEMEILDADKGERLESSSGRLASRDIVQFVALRDVQYGEISVVQALLAELPSQFLTYMRIRNMKPIPP.

Glycine 2 carries N-myristoyl glycine lipidation. 2 consecutive C2 domains span residues alanine 26–leucine 163 and glutamine 176–leucine 303. Ca(2+) contacts are provided by aspartate 63, aspartate 69, aspartate 122, and aspartate 124. The region spanning asparagine 341–leucine 560 is the VWFA domain.

This sequence belongs to the copine family. In terms of assembly, interacts (via VWA domain) with BAP1 and BAP2. Interacts with HSP70-1 and HSP70-2. It depends on Ca(2+) as a cofactor. Post-translationally, based on mass spectrometry analysis, the N-peptide must be modified and there might be additional modifications other than myristoylation. In terms of tissue distribution, expressed in roots and flowers and, at higher levels, in leaves and stems. Strongly expressed in growing tissues. Not detected in green siliques.

It is found in the cell membrane. Its function is as follows. Negative regulator of cell death and defense responses. Negative regulator of several R genes, including SNC1. May have effects in promoting growth and development. May function in membrane trafficking and in fusion of vesicles with plasma membrane at low temperature. Exhibits calcium-dependent phospholipid binding properties. This chain is Protein BONZAI 1 (BON1), found in Arabidopsis thaliana (Mouse-ear cress).